The following is a 289-amino-acid chain: Phospholipase C (289 aa).

A signal peptide spans 1 to 25 (MKFKKVVLGMCLIASVLVFPVTIKA). Residues 26 to 51 (NACCDEYLQTPAAPHDIDSKLPHKLS) constitute a propeptide that is removed on maturation. Tryptophan 52, histidine 65, aspartate 106, histidine 120, histidine 169, aspartate 173, histidine 179, histidine 193, and glutamate 197 together coordinate Zn(2+). One can recognise a Zn-dependent PLC domain in the interval 52–289 (WSADNPTNTD…LEFWSKKTNE (238 aa)).

This sequence belongs to the bacterial zinc-metallophospholipase C family. As to quaternary structure, forms monomers, dimers and higher order oligomers, but only the monomer is enzymatically active. The cofactor is Zn(2+).

The protein resides in the secreted. It catalyses the reaction a 1,2-diacyl-sn-glycero-3-phosphocholine + H2O = phosphocholine + a 1,2-diacyl-sn-glycerol + H(+). It carries out the reaction 1,2-dihexadecanoyl-sn-glycero-3-phosphocholine + H2O = 1,2-dihexadecanoyl-sn-glycerol + phosphocholine + H(+). The enzyme catalyses 1-hexadecanoyl-2-(9Z-octadecenoyl)-sn-glycero-3-phosphocholine + H2O = 1-hexadecanoyl-2-(9Z-octadecenoyl)-sn-glycerol + phosphocholine + H(+). The catalysed reaction is 1,2-di-(9Z-octadecenoyl)-sn-glycero-3-phosphocholine + H2O = 1,2-di-(9Z-octadecenoyl)-sn-glycerol + phosphocholine + H(+). It catalyses the reaction a 1,2-diacyl-sn-glycero-3-phosphoethanolamine + H2O = phosphoethanolamine + a 1,2-diacyl-sn-glycerol + H(+). It carries out the reaction 1,2-di-(9Z-octadecenoyl)-sn-glycero-3-phosphoethanolamine + H2O = phosphoethanolamine + 1,2-di-(9Z-octadecenoyl)-sn-glycerol + H(+). The enzyme catalyses 1,2-dihexadecanoyl-sn-glycero-3-phosphoethanolamine + H2O = 1,2-dihexadecanoyl-sn-glycerol + phosphoethanolamine + H(+). The catalysed reaction is a 1,2-diacyl-sn-glycero-3-phospho-L-serine + H2O = O-phospho-L-serine + a 1,2-diacyl-sn-glycerol + H(+). It catalyses the reaction a 1,2-diacyl-sn-glycero-3-phosphoglycerol + H2O = glycerol 1-phosphate + a 1,2-diacyl-sn-glycerol + H(+). It carries out the reaction a 1,2-diacyl-sn-glycero-3-phospho-(1D-myo-inositol) + H2O = 1D-myo-inositol 1-phosphate + a 1,2-diacyl-sn-glycerol + H(+). The enzyme catalyses a sphingomyelin + H2O = phosphocholine + an N-acylsphing-4-enine + H(+). The catalysed reaction is a 1-O-(1Z-alkenyl)-2-acyl-sn-glycero-3-phosphoethanolamine + H2O = a 1-O-(1Z-alkenyl)-2-acyl-sn-glycerol + phosphoethanolamine + H(+). Its activity is regulated as follows. Enzymatic activity of LmPC-PLC can be specifically inhibited by its propeptide added in trans. The tendency of the enzyme to oligomerize, which appears to largely attenuate the enzymatic activity, may be one of the mechanisms regulating phospholipase activity in the host cell during the different steps of the infection cycle of L.monocytogenes. Enzyme activity is inhibited by EDTA and o-phenanthroline in vitro. In terms of biological role, major virulence factor whose phospholipase activity facilitates pore formation by the pore-forming toxin listeriolysin O (LLO), leading to vacuolar membrane disruption and vacuolar escape of L.monocytogenes, which enables the bacterium to spread in the host. Acts as a phospholipase C exhibiting broad substrate specificity, with the highest activities towards diacylglycerophospholipids with phosphocholine, phosphoserine, and phosphoethanolamine head groups, but less towards phosphoglycerol or phosphoinositol head groups. Is also able to hydrolyze sphingomyelin and plasmenylethanolamine. This is Phospholipase C from Listeria monocytogenes serovar 1/2a (strain ATCC BAA-679 / EGD-e).